A 712-amino-acid polypeptide reads, in one-letter code: Amino-acid acetyltransferase, mitochondrial (712 aa).

The N-terminal 47 residues, M1–T47, are a transit peptide targeting the mitochondrion. The interval F55–D99 is disordered. Over residues K63–Q74 the composition is skewed to basic and acidic residues. Over residues P81–E93 the composition is skewed to low complexity. One can recognise an N-acetyltransferase domain in the interval G534 to P702.

The protein belongs to the acetyltransferase family.

It is found in the mitochondrion. It catalyses the reaction L-glutamate + acetyl-CoA = N-acetyl-L-glutamate + CoA + H(+). It participates in amino-acid biosynthesis; L-arginine biosynthesis; N(2)-acetyl-L-ornithine from L-glutamate: step 1/4. Its activity is regulated as follows. Inhibited by arginine. Its function is as follows. N-acetylglutamate synthase involved in arginine biosynthesis. The polypeptide is Amino-acid acetyltransferase, mitochondrial (arg-14) (Neurospora crassa (strain ATCC 24698 / 74-OR23-1A / CBS 708.71 / DSM 1257 / FGSC 987)).